Consider the following 56-residue polypeptide: Endoglucanase Cel5A (56 aa).

The active-site Nucleophile is the Glu45.

The protein belongs to the glycosyl hydrolase 5 (cellulase A) family.

Its subcellular location is the secreted. The protein resides in the extracellular space. It catalyses the reaction Endohydrolysis of (1-&gt;4)-beta-D-glucosidic linkages in cellulose, lichenin and cereal beta-D-glucans.. Its function is as follows. Has avicelase and carboxymethylcellulase activity. This Gloeophyllum trabeum (Brown rot fungus) protein is Endoglucanase Cel5A.